The following is a 295-amino-acid chain: Bifunctional protein FolD (295 aa).

NADP(+) is bound by residues 166–168 (GRS), serine 191, and isoleucine 232.

This sequence belongs to the tetrahydrofolate dehydrogenase/cyclohydrolase family. Homodimer.

It carries out the reaction (6R)-5,10-methylene-5,6,7,8-tetrahydrofolate + NADP(+) = (6R)-5,10-methenyltetrahydrofolate + NADPH. The enzyme catalyses (6R)-5,10-methenyltetrahydrofolate + H2O = (6R)-10-formyltetrahydrofolate + H(+). Its pathway is one-carbon metabolism; tetrahydrofolate interconversion. Catalyzes the oxidation of 5,10-methylenetetrahydrofolate to 5,10-methenyltetrahydrofolate and then the hydrolysis of 5,10-methenyltetrahydrofolate to 10-formyltetrahydrofolate. The sequence is that of Bifunctional protein FolD from Rhodopseudomonas palustris (strain BisA53).